The sequence spans 61 residues: Photosystem II reaction center X protein (61 aa).

A helical membrane pass occupies residues Ile26–Phe46.

This sequence belongs to the PsbX family. Type 2 subfamily. As to quaternary structure, PSII consists of a core antenna complex that captures photons, and an electron transfer chain that converts photonic excitation into a charge separation. PSII forms dimeric complexes.

The protein resides in the cellular thylakoid membrane. Involved in the binding and/or turnover of quinones at the Q(B) site of Photosystem II. This chain is Photosystem II reaction center X protein, found in Prochlorococcus marinus (strain MIT 9301).